The chain runs to 113 residues: Large ribosomal subunit protein eL34 (113 aa).

Belongs to the eukaryotic ribosomal protein eL34 family.

This chain is Large ribosomal subunit protein eL34, found in Methanopyrus kandleri (strain AV19 / DSM 6324 / JCM 9639 / NBRC 100938).